The chain runs to 288 residues: Nucleotide-binding protein Pcar_1935 (288 aa).

Position 11 to 18 (G11 to T18) interacts with ATP. D62 to N65 contributes to the GTP binding site.

This sequence belongs to the RapZ-like family.

Its function is as follows. Displays ATPase and GTPase activities. In Syntrophotalea carbinolica (strain DSM 2380 / NBRC 103641 / GraBd1) (Pelobacter carbinolicus), this protein is Nucleotide-binding protein Pcar_1935.